Here is a 414-residue protein sequence, read N- to C-terminus: Cytochrome c biogenesis protein Ccs1 (414 aa).

Transmembrane regions (helical) follow at residues 14–34, 73–93, and 159–179; these read LTVA…GTVI, SWWF…CTIT, and VSPI…MLST.

It belongs to the Ccs1/CcsB family. As to quaternary structure, may interact with CcsA.

The protein resides in the plastid. It is found in the chloroplast thylakoid membrane. Required during biogenesis of c-type cytochromes (cytochrome c6 and cytochrome f) at the step of heme attachment. The chain is Cytochrome c biogenesis protein Ccs1 from Guillardia theta (Cryptophyte).